The primary structure comprises 214 residues: Probable transaldolase (214 aa).

Residue Lys83 is the Schiff-base intermediate with substrate of the active site.

The protein belongs to the transaldolase family. Type 3B subfamily.

It localises to the cytoplasm. It carries out the reaction D-sedoheptulose 7-phosphate + D-glyceraldehyde 3-phosphate = D-erythrose 4-phosphate + beta-D-fructose 6-phosphate. Its pathway is carbohydrate degradation; pentose phosphate pathway; D-glyceraldehyde 3-phosphate and beta-D-fructose 6-phosphate from D-ribose 5-phosphate and D-xylulose 5-phosphate (non-oxidative stage): step 2/3. Its function is as follows. Transaldolase is important for the balance of metabolites in the pentose-phosphate pathway. The sequence is that of Probable transaldolase from Geotalea daltonii (strain DSM 22248 / JCM 15807 / FRC-32) (Geobacter daltonii).